Reading from the N-terminus, the 852-residue chain is Kinesin-like protein KIF18B (852 aa).

One can recognise a Kinesin motor domain in the interval 7–351; sequence TLQVVVRVRP…LKYADRAKEI (345 aa). An ATP-binding site is contributed by 109-116; it reads GATGAGKT. Residues 366 to 393 are a coiled coil; it reads ISQYATICQQLQAEVAALRKKLQVYEGG. 2 disordered regions span residues 390–424 and 437–485; these read YEGGGQPPPQDLPGSPKSGPPPEHQPCTPELPAGP and QVER…RLTL. Serine 404 is modified (phosphoserine). Residue threonine 417 is modified to Phosphothreonine. Over residues 451–461 the composition is skewed to acidic residues; that stretch reads QSPEDEDEGPA. A phosphoserine mark is found at serine 452, serine 480, and serine 558. Disordered stretches follow at residues 575 to 594 and 602 to 689; these read IPVPSPLCPEPPGYTGPVTR and GPLH…SPRV. Positions 577 to 588 are enriched in pro residues; that stretch reads VPSPLCPEPPGY. The short motif at 624-632 is the Nuclear localization signal element; that stretch reads PMEKKRRRP. Residues serine 633 and serine 639 each carry the phosphoserine modification. The short motif at 653–656 is the MAPRE1-binding element; that stretch reads SFLP. The residue at position 662 (serine 662) is a Phosphoserine. The span at 664 to 673 shows a compositional bias: polar residues; the sequence is PDTQPSQGPS. Threonine 674 carries the post-translational modification Phosphothreonine. Residues 711–736 form a KIF2C-binding region; the sequence is TPLALPTRDLNATFDLSEEPPSKPSF. The segment at 767-798 is disordered; it reads MKGPKPTSSLPGTSACKKKRVASSSVSHGRSR. 2 short sequence motifs (MAPRE1-binding) span residues 774 to 777 and 800 to 803; these read SSLP and ARLP. Position 822 is a phosphoserine (serine 822).

This sequence belongs to the TRAFAC class myosin-kinesin ATPase superfamily. Kinesin family. In terms of assembly, interacts with MAPRE1; this interaction is required for efficient accumulation at microtubule plus ends. Interacts with KIF2C at microtubule tips; this interaction increases the affinity of both partners for microtubule plus ends and is required for robust microtubule depolymerization. KIF2C phosphorylation by AURKA or AURKB strongly reduces KIF18B-binding. As to expression, shows a prominent expression in the amygdala.

Its subcellular location is the nucleus. The protein localises to the cytoplasm. It is found in the cytoskeleton. In complex with KIF2C, constitutes the major microtubule plus-end depolymerizing activity in mitotic cells. Its major role may be to transport KIF2C and/or MAPRE1 along microtubules. The sequence is that of Kinesin-like protein KIF18B (KIF18B) from Homo sapiens (Human).